The sequence spans 146 residues: Anti-sigma F factor (146 aa).

Belongs to the anti-sigma-factor family.

It carries out the reaction L-seryl-[protein] + ATP = O-phospho-L-seryl-[protein] + ADP + H(+). The enzyme catalyses L-threonyl-[protein] + ATP = O-phospho-L-threonyl-[protein] + ADP + H(+). Functionally, binds to sigma F and blocks its ability to form an RNA polymerase holoenzyme (E-sigma F). Phosphorylates SpoIIAA on a serine residue. This phosphorylation may enable SpoIIAA to act as an anti-anti-sigma factor that counteracts SpoIIAB and thus releases sigma F from inhibition. The polypeptide is Anti-sigma F factor (Bacillus anthracis (strain A0248)).